The chain runs to 659 residues: Acetyl-coenzyme A synthetase (659 aa).

Positions 1-35 (MATEQTKGQSSESISSVLSERRKFPPPEAFSSQSH) are disordered. CoA is bound by residues 205-208 (RRGS), Thr323, and Asn347. Residues 399–401 (GEP), 423–428 (DTWWQT), Asp512, and Arg527 each bind ATP. Position 535 (Ser535) interacts with CoA. Arg538 is a binding site for ATP. Mg(2+) is bound by residues Val549, His551, and Val554. Position 621 is an N6-acetyllysine (Lys621).

Belongs to the ATP-dependent AMP-binding enzyme family. Mg(2+) serves as cofactor. In terms of processing, acetylated. Deacetylation by the SIR2-homolog deacetylase activates the enzyme.

It carries out the reaction acetate + ATP + CoA = acetyl-CoA + AMP + diphosphate. Its function is as follows. Catalyzes the conversion of acetate into acetyl-CoA (AcCoA), an essential intermediate at the junction of anabolic and catabolic pathways. AcsA undergoes a two-step reaction. In the first half reaction, AcsA combines acetate with ATP to form acetyl-adenylate (AcAMP) intermediate. In the second half reaction, it can then transfer the acetyl group from AcAMP to the sulfhydryl group of CoA, forming the product AcCoA. In Chlorobaculum tepidum (strain ATCC 49652 / DSM 12025 / NBRC 103806 / TLS) (Chlorobium tepidum), this protein is Acetyl-coenzyme A synthetase.